Consider the following 507-residue polypeptide: ATP synthase subunit alpha, chloroplastic (507 aa).

ATP is bound at residue 170 to 177 (GDRQTGKT).

This sequence belongs to the ATPase alpha/beta chains family. As to quaternary structure, F-type ATPases have 2 components, CF(1) - the catalytic core - and CF(0) - the membrane proton channel. CF(1) has five subunits: alpha(3), beta(3), gamma(1), delta(1), epsilon(1). CF(0) has four main subunits: a, b, b' and c.

It is found in the plastid. It localises to the chloroplast thylakoid membrane. The enzyme catalyses ATP + H2O + 4 H(+)(in) = ADP + phosphate + 5 H(+)(out). Functionally, produces ATP from ADP in the presence of a proton gradient across the membrane. The alpha chain is a regulatory subunit. This is ATP synthase subunit alpha, chloroplastic from Panax ginseng (Korean ginseng).